A 396-amino-acid chain; its full sequence is MIIEPKMRGFICLTSHPTGCEQNVINQINYVKSKGVINGPKKVLVIGASTGFGLASRITSAFGSNAATIGVFFEKPAQEGKPGSPGWYNTVAFQNEAKKAGIYAKSINGDAFSTEVKQKTIDLIKADLGQVDLVIYSLASPVRTNPVTGVTHRSVLKPIGGAFSNKTVDFHTGNVSTVTIEPANEEDVTNTVAVMGGEDWGMWMDAMLEAGVLAEGATTVAYSYIGPALTEAVYRKGTIGRAKDHLEASAATITDKLKSVKGKAYVSVNKALVTQASSAIPVIPLYISLLYKVMKAEGIHEGCIEQIQRLYADRLYTGKAIPTDEQGRIRIDDWEMREDVQANVAALWEQVTSENVSDISDLKGYKNDFLNLFGFAVNKVDYLADVNENVTIEGLV.

Residues 47–52 (GASTGF), 73–74 (FE), 110–111 (DA), and 138–139 (LA) each bind NAD(+). Y224 is a substrate binding site. Residue Y234 is the Proton donor of the active site. NAD(+) contacts are provided by residues K243 and 272–274 (LVT).

The protein belongs to the TER reductase family. As to quaternary structure, monomer.

It catalyses the reaction a 2,3-saturated acyl-[ACP] + NAD(+) = a (2E)-enoyl-[ACP] + NADH + H(+). It participates in lipid metabolism; fatty acid biosynthesis. Involved in the final reduction of the elongation cycle of fatty acid synthesis (FAS II). Catalyzes the reduction of a carbon-carbon double bond in an enoyl moiety that is covalently linked to an acyl carrier protein (ACP). The chain is Enoyl-[acyl-carrier-protein] reductase [NADH] from Cytophaga hutchinsonii (strain ATCC 33406 / DSM 1761 / CIP 103989 / NBRC 15051 / NCIMB 9469 / D465).